The following is a 273-amino-acid chain: Shikimate dehydrogenase (NADP(+)) (273 aa).

Shikimate is bound by residues 15 to 17 (SKS) and Thr-62. Residue Lys-66 is the Proton acceptor of the active site. NADP(+) is bound at residue Asp-78. The shikimate site is built by Asn-87 and Asp-103. NADP(+) contacts are provided by residues 127 to 131 (GAGGA), 150 to 155 (NRTHTR), Ala-218, and Gly-238.

It belongs to the shikimate dehydrogenase family. In terms of assembly, homodimer.

It carries out the reaction shikimate + NADP(+) = 3-dehydroshikimate + NADPH + H(+). The protein operates within metabolic intermediate biosynthesis; chorismate biosynthesis; chorismate from D-erythrose 4-phosphate and phosphoenolpyruvate: step 4/7. Involved in the biosynthesis of the chorismate, which leads to the biosynthesis of aromatic amino acids. Catalyzes the reversible NADPH linked reduction of 3-dehydroshikimate (DHSA) to yield shikimate (SA). The chain is Shikimate dehydrogenase (NADP(+)) from Yersinia pseudotuberculosis serotype O:1b (strain IP 31758).